Consider the following 289-residue polypeptide: 4-hydroxybenzoate octaprenyltransferase (289 aa).

The next 8 helical transmembrane spans lie at 23–43, 46–66, 99–119, 141–161, 163–183, 213–233, 234–254, and 268–288; these read IGALLLLWPTLWALWVATPGV, LWILAVFVAGVWLMRAAGCVV, LFVVLVALSFLLVLTLNTMTI, LPQVVLGAAFGWSIPMAFAAV, ESVPLSCWLMFLANILWAVAY, LIIGILQIAVLALMALIGWLN, GLGWGYYWSVLVAGALFVYQQ, and AFMNNNYVGLVLFLGLAMSYV.

This sequence belongs to the UbiA prenyltransferase family. Requires Mg(2+) as cofactor.

It localises to the cell inner membrane. The enzyme catalyses all-trans-octaprenyl diphosphate + 4-hydroxybenzoate = 4-hydroxy-3-(all-trans-octaprenyl)benzoate + diphosphate. It functions in the pathway cofactor biosynthesis; ubiquinone biosynthesis. Catalyzes the prenylation of para-hydroxybenzoate (PHB) with an all-trans polyprenyl group. Mediates the second step in the final reaction sequence of ubiquinone-8 (UQ-8) biosynthesis, which is the condensation of the polyisoprenoid side chain with PHB, generating the first membrane-bound Q intermediate 3-octaprenyl-4-hydroxybenzoate. The chain is 4-hydroxybenzoate octaprenyltransferase from Citrobacter koseri (strain ATCC BAA-895 / CDC 4225-83 / SGSC4696).